Here is an 83-residue protein sequence, read N- to C-terminus: Exodeoxyribonuclease 7 small subunit (83 aa).

Positions Val63–Arg83 are disordered.

Belongs to the XseB family. As to quaternary structure, heterooligomer composed of large and small subunits.

Its subcellular location is the cytoplasm. It catalyses the reaction Exonucleolytic cleavage in either 5'- to 3'- or 3'- to 5'-direction to yield nucleoside 5'-phosphates.. Functionally, bidirectionally degrades single-stranded DNA into large acid-insoluble oligonucleotides, which are then degraded further into small acid-soluble oligonucleotides. The chain is Exodeoxyribonuclease 7 small subunit from Gluconobacter oxydans (strain 621H) (Gluconobacter suboxydans).